Reading from the N-terminus, the 550-residue chain is Chaperonin GroEL 1 (550 aa).

ATP is bound by residues 30 to 33 (TLGP), lysine 51, 87 to 91 (DGTTT), glycine 415, and aspartate 496.

Belongs to the chaperonin (HSP60) family. As to quaternary structure, forms a cylinder of 14 subunits composed of two heptameric rings stacked back-to-back. Interacts with the co-chaperonin GroES.

Its subcellular location is the cytoplasm. It carries out the reaction ATP + H2O + a folded polypeptide = ADP + phosphate + an unfolded polypeptide.. Together with its co-chaperonin GroES, plays an essential role in assisting protein folding. The GroEL-GroES system forms a nano-cage that allows encapsulation of the non-native substrate proteins and provides a physical environment optimized to promote and accelerate protein folding. In Rhodopseudomonas palustris (strain HaA2), this protein is Chaperonin GroEL 1.